The primary structure comprises 368 residues: Acetyl-coenzyme A carboxylase carboxyl transferase subunit alpha (368 aa).

Residues 44–294 enclose the CoA carboxyltransferase C-terminal domain; that stretch reads EIDNKLQEIY…RKSIEKNLNE (251 aa).

The protein belongs to the AccA family. Acetyl-CoA carboxylase is a heterohexamer composed of biotin carboxyl carrier protein (AccB), biotin carboxylase (AccC) and two subunits each of ACCase subunit alpha (AccA) and ACCase subunit beta (AccD).

It is found in the cytoplasm. It catalyses the reaction N(6)-carboxybiotinyl-L-lysyl-[protein] + acetyl-CoA = N(6)-biotinyl-L-lysyl-[protein] + malonyl-CoA. It participates in lipid metabolism; malonyl-CoA biosynthesis; malonyl-CoA from acetyl-CoA: step 1/1. In terms of biological role, component of the acetyl coenzyme A carboxylase (ACC) complex. First, biotin carboxylase catalyzes the carboxylation of biotin on its carrier protein (BCCP) and then the CO(2) group is transferred by the carboxyltransferase to acetyl-CoA to form malonyl-CoA. The protein is Acetyl-coenzyme A carboxylase carboxyl transferase subunit alpha of Pelagibacter ubique (strain HTCC1062).